The chain runs to 81 residues: LYR motif-containing protein At3g19508 (81 aa).

This sequence belongs to the complex I LYR family. LYRM9 subfamily.

This Arabidopsis thaliana (Mouse-ear cress) protein is LYR motif-containing protein At3g19508.